The primary structure comprises 435 residues: MKGITLTAPKRLRGVIEVPGDKSISHRSVLFNAIATGSAHITHFLPGADCLSTVACIRALGVTVEQPAERELIVHGVGLGGLREPADVLDCGNSGTTLRLLAGLLAGHPFFSVLTGDASLRSRPQRRIVVPLRAMGAQIDGRDDGDRAPLAIRGNRLRGGHYELSIASAQVKSALLLAALNAEQPLTLTGRIDSRDHTERMLAAMGLEITVTADQITIQPPSEATAPTALSLRVPGDPSSAAFWWVAAAIHPDAELVTPGVCLNPTRIGAIEVLQAMGADLTVMNERLEGSEPVGDVVVRSSSLRGTTIAGTLIPRLIDEIPVLAVAAACASGETVIRDAQELRAKETDRIATVAAGLSAMGAVVEPTADGMVIVGQPGQLQGTTLNSFHDHRLAMAWAIAAMVARGETTILEPAAAAVSYPEFWQTLAMVQEAA.

3-phosphoshikimate is bound by residues lysine 22, serine 23, and arginine 27. Lysine 22 is a phosphoenolpyruvate binding site. Glycine 95 and arginine 123 together coordinate phosphoenolpyruvate. Residues serine 168, glutamine 170, aspartate 319, and lysine 346 each coordinate 3-phosphoshikimate. Glutamine 170 provides a ligand contact to phosphoenolpyruvate. Aspartate 319 serves as the catalytic Proton acceptor. Phosphoenolpyruvate is bound by residues arginine 350 and arginine 393.

Belongs to the EPSP synthase family. As to quaternary structure, monomer.

It is found in the cytoplasm. It carries out the reaction 3-phosphoshikimate + phosphoenolpyruvate = 5-O-(1-carboxyvinyl)-3-phosphoshikimate + phosphate. Its pathway is metabolic intermediate biosynthesis; chorismate biosynthesis; chorismate from D-erythrose 4-phosphate and phosphoenolpyruvate: step 6/7. Functionally, catalyzes the transfer of the enolpyruvyl moiety of phosphoenolpyruvate (PEP) to the 5-hydroxyl of shikimate-3-phosphate (S3P) to produce enolpyruvyl shikimate-3-phosphate and inorganic phosphate. The protein is 3-phosphoshikimate 1-carboxyvinyltransferase of Chloroflexus aurantiacus (strain ATCC 29364 / DSM 637 / Y-400-fl).